Here is a 625-residue protein sequence, read N- to C-terminus: Phosphomethylpyrimidine synthase (625 aa).

Residues Asn-230, Met-259, Tyr-288, His-324, 344–346 (SRG), 385–388 (DGLR), and Glu-424 contribute to the substrate site. His-428 is a binding site for Zn(2+). Tyr-451 is a substrate binding site. His-492 is a binding site for Zn(2+). The [4Fe-4S] cluster site is built by Cys-572, Cys-575, and Cys-580.

It belongs to the ThiC family. As to quaternary structure, homodimer. The cofactor is [4Fe-4S] cluster.

It catalyses the reaction 5-amino-1-(5-phospho-beta-D-ribosyl)imidazole + S-adenosyl-L-methionine = 4-amino-2-methyl-5-(phosphooxymethyl)pyrimidine + CO + 5'-deoxyadenosine + formate + L-methionine + 3 H(+). It functions in the pathway cofactor biosynthesis; thiamine diphosphate biosynthesis. Its function is as follows. Catalyzes the synthesis of the hydroxymethylpyrimidine phosphate (HMP-P) moiety of thiamine from aminoimidazole ribotide (AIR) in a radical S-adenosyl-L-methionine (SAM)-dependent reaction. The chain is Phosphomethylpyrimidine synthase from Xanthomonas campestris pv. campestris (strain 8004).